Here is a 211-residue protein sequence, read N- to C-terminus: Glycerol-3-phosphate acyltransferase 2 (211 aa).

5 helical membrane-spanning segments follow: residues 6–26, 57–77, 82–102, 124–144, and 148–168; these read FASLFILAYLLGSFPAGVVVG, IIVFLIDFFKGTLATLIPVIF, HYLCLIFGLVAILGHAFPIFL, FFLICAVIFIPILFITSMVSL, and ISVVLIFIASFFFHDIALSII.

This sequence belongs to the PlsY family. Probably interacts with PlsX.

It localises to the cell membrane. The enzyme catalyses an acyl phosphate + sn-glycerol 3-phosphate = a 1-acyl-sn-glycero-3-phosphate + phosphate. Its pathway is lipid metabolism; phospholipid metabolism. Its function is as follows. Catalyzes the transfer of an acyl group from acyl-phosphate (acyl-PO(4)) to glycerol-3-phosphate (G3P) to form lysophosphatidic acid (LPA). This enzyme utilizes acyl-phosphate as fatty acyl donor, but not acyl-CoA or acyl-ACP. In Lactobacillus acidophilus (strain ATCC 700396 / NCK56 / N2 / NCFM), this protein is Glycerol-3-phosphate acyltransferase 2.